The following is a 156-amino-acid chain: UPF0266 membrane protein NT01EI_1718 (156 aa).

The next 3 membrane-spanning stretches (helical) occupy residues 6–26 (IALL…EAIM), 46–63 (DSLI…RNIS), and 67–87 (APFT…IFYL).

Belongs to the UPF0266 family.

Its subcellular location is the cell inner membrane. The polypeptide is UPF0266 membrane protein NT01EI_1718 (Edwardsiella ictaluri (strain 93-146)).